The chain runs to 311 residues: Methionyl-tRNA formyltransferase (311 aa).

109–112 is a binding site for (6S)-5,6,7,8-tetrahydrofolate; the sequence is SLLP.

The protein belongs to the Fmt family.

The catalysed reaction is L-methionyl-tRNA(fMet) + (6R)-10-formyltetrahydrofolate = N-formyl-L-methionyl-tRNA(fMet) + (6S)-5,6,7,8-tetrahydrofolate + H(+). Its function is as follows. Attaches a formyl group to the free amino group of methionyl-tRNA(fMet). The formyl group appears to play a dual role in the initiator identity of N-formylmethionyl-tRNA by promoting its recognition by IF2 and preventing the misappropriation of this tRNA by the elongation apparatus. The chain is Methionyl-tRNA formyltransferase from Staphylococcus aureus (strain bovine RF122 / ET3-1).